A 182-amino-acid polypeptide reads, in one-letter code: Large ribosomal subunit protein eL15 (182 aa).

Belongs to the eukaryotic ribosomal protein eL15 family.

In Methanothermobacter thermautotrophicus (strain ATCC 29096 / DSM 1053 / JCM 10044 / NBRC 100330 / Delta H) (Methanobacterium thermoautotrophicum), this protein is Large ribosomal subunit protein eL15 (rpl15e).